Here is a 538-residue protein sequence, read N- to C-terminus: Neutral protease B (538 aa).

Positions 1–28 (MRNLTKTSLLLAGLCTAAQMVFVTHASA) are cleaved as a signal peptide. Residues 29–223 (EESIEYDHTY…VIESFNAIHE (195 aa)) constitute a propeptide, activation peptide. Position 365 (D365) interacts with Ca(2+). A Zn(2+)-binding site is contributed by H369. E370 is a catalytic residue. 2 residues coordinate Zn(2+): H373 and E393. Ca(2+)-binding residues include D404, D406, D407, E409, E412, Y415, T416, I419, and D422. The tract at residues 421–441 (GDSLRSLEDPSKQGNPDHYSN) is disordered. Residue H453 is the Proton donor of the active site.

Belongs to the peptidase M4 family. It depends on Zn(2+) as a cofactor.

The protein localises to the secreted. Its activity is regulated as follows. Protease activity can be inhibited in vitro by either a zinc specific chelator, 1,10-phenanthroline, or a metal chelator, EDTA. The enzyme is resistant to phenylmethylsulfonyl fluoride and iodoacetic acid. In terms of biological role, protease able to cleave casein in vitro. The protein is Neutral protease B of Bacillus subtilis (strain 168).